The chain runs to 266 residues: MAKQMFRALGALLLTLPVWLYAAPRVITLSPANTELAFAAEITPVGVSSYSDYPPEAQKIEQVSTWQGMNLERIVALKPDLVVAWRGGNAERQVNQLTSLGIKVMWVDAVTIEQIADALRQLAAWSPQPEKAQQAAQTLLKEYAALKVEYAGKAKKRVFLQFGMNPLFTSGKGSIQHQVLTTCGGENVFADSRVPWPQVSREQVLARHPQAIIVAGKAGEILKIEQYWGNLLKIPVIPLNSDWFERASPRIILAAKQLCNALSQVN.

The first 22 residues, 1-22, serve as a signal peptide directing secretion; the sequence is MAKQMFRALGALLLTLPVWLYA. In terms of domain architecture, Fe/B12 periplasmic-binding spans 25–266; it reads RVITLSPANT…QLCNALSQVN (242 aa). Residues Y50 and 242–246 each bind cyanocob(III)alamin; that span reads DWFER. C183 and C259 are oxidised to a cystine.

It belongs to the BtuF family. The complex is composed of two ATP-binding proteins (BtuD), two transmembrane proteins (BtuC) and a solute-binding protein (BtuF).

It is found in the periplasm. Its function is as follows. Part of the ABC transporter complex BtuCDF involved in vitamin B12 import. Binds vitamin B12 and delivers it to the periplasmic surface of BtuC. This is Vitamin B12-binding protein from Salmonella typhi.